A 292-amino-acid polypeptide reads, in one-letter code: Histamine N-methyltransferase (292 aa).

Glu-28 is a binding site for substrate. Residues Gly-60, Glu-89, Gln-94, Ser-120, and Ile-142 each contribute to the S-adenosyl-L-methionine site. Asn-283 serves as a coordination point for substrate.

The protein belongs to the class I-like SAM-binding methyltransferase superfamily. HNMT family. In terms of assembly, monomer.

The protein localises to the cytoplasm. It carries out the reaction histamine + S-adenosyl-L-methionine = N(tau)-methylhistamine + S-adenosyl-L-homocysteine + H(+). Functionally, inactivates histamine by N-methylation. Plays an important role in degrading histamine and in regulating the airway response to histamine. In Pongo abelii (Sumatran orangutan), this protein is Histamine N-methyltransferase (HNMT).